The following is a 1251-amino-acid chain: Cyclic nucleotide-gated channel beta-1 (1251 aa).

Disordered stretches follow at residues 1-75 (MLGW…QETK), 121-151 (ITEDPAQILGHGSTGDTGCTDEPNEALEAQD), 172-252 (QPPK…TRDP), and 314-561 (EDAH…STNS). At 1–656 (MLGWVQRVLP…SIDPLTNLMY (656 aa)) the chain is on the cytoplasmic side. Residues 23–50 (EEEEVEPEPEMEAEVEPEPNPEEAETES) show a composition bias toward acidic residues. Polar residues predominate over residues 238-247 (GSQAQTSSLP). Over residues 335-352 (EENKAVEKMPRELSRIEE) the composition is skewed to basic and acidic residues. The span at 353-373 (EKEDEEEEEEEEEEEEEEEVT) shows a compositional bias: acidic residues. Positions 404–423 (KLWEEVGEEAKKEAEEKAKE) are enriched in basic and acidic residues. A compositionally biased stretch (acidic residues) spans 424–434 (EAEEVAEEEAE). The segment covering 435-446 (KEPQDWAETKEE) has biased composition (basic and acidic residues). The tract at residues 557–567 (ASTNSAIINDR) is calmodulin-binding CaM1. The IQ-like signature appears at 568–578 (LQELVKLFKER). Positions 585–619 (KLIDPDVTSDEESPKPSPAKKAPEPAPDTKPAEAE) are disordered. A helical membrane pass occupies residues 657–678 (VLWLFFVVMAWNWNCWLIPVRW). Residues 679–687 (AFPYQTPDN) lie on the Extracellular side of the membrane. A helical membrane pass occupies residues 688–709 (IHHWLLMDYLCDLIYFLDITVF). Residues 710 to 724 (QTRLQFVRGGDIITD) lie on the Cytoplasmic side of the membrane. Residues 725–744 (KKDMRNNYLKSRRFKMDLLS) traverse the membrane as a helical segment. The Extracellular segment spans residues 745 to 760 (LLPLDFLYLKVGVNPL). A helical membrane pass occupies residues 761–773 (LRLPRCLKYMAFF). The Cytoplasmic portion of the chain corresponds to 774-785 (EFNSRLESILSK). The helical transmembrane segment at 786–808 (AYVYRVIRTTAYLLYSLHLNSCL) threads the bilayer. Positions 786 to 885 (AYVYRVIRTT…IGQMRDVVGA (100 aa)) are ion conduction pathway. The Extracellular portion of the chain corresponds to 809 to 831 (YYWASAYQGLGSTHWVYDGVGNS). Transmembrane regions (helical) follow at residues 832-858 (YIRCYYFAVKTLITIGGLPDPKTLFEI) and 859-884 (VFQLLNYFTGVFAFSVMIGQMRDVVG). Residues 885-1251 (AATAGQTYYR…MPEEREEKAE (367 aa)) are Cytoplasmic-facing. Residues 888-964 (AGQTYYRSCM…NIVSKVALFQ (77 aa)) form a C-linker region. The cyclic nucleotide-binding domain stretch occupies residues 968–1084 (RQMIFDMLKR…LLRKKARRML (117 aa)). Glycine 1029, glutamate 1030, serine 1032, arginine 1042, and threonine 1043 together coordinate 3',5'-cyclic GMP. Residue arginine 1042 coordinates 3',5'-cyclic AMP. A calmodulin-binding CaM2 region spans residues 1148 to 1154 (QQELVEQ). Positions 1151 to 1251 (LVEQAKSSQD…MPEEREEKAE (101 aa)) are disordered. The segment covering 1183-1203 (PPAPRTPPEPPGSPPSSPPPA) has biased composition (pro residues). The span at 1242–1251 (MPEEREEKAE) shows a compositional bias: basic and acidic residues.

This sequence belongs to the cyclic nucleotide-gated cation channel (TC 1.A.1.5) family. CNGB1 subfamily. The rod cyclic nucleotide-gated channel is a heterotetramer composed of CNGA1 and CNGB1 subunits with 3:1 stoichiometry. CNGA1:CNGB1 channel binds Ca(2+)-bound CALM1 via CaM1 and CaM2 regions of the CNGB1 subunit; this interaction modulates the affinity of the channel for cNMPs in response to intracellular Ca(2+) levels. The olfactory cyclic nucleotide-gated channel is a heterotetramer composed of CNGA2, CNGA4 and CNGB1 subunits with 2:1:1 stoichiometry.

Its subcellular location is the cell membrane. The protein resides in the cell projection. The protein localises to the cilium membrane. The catalysed reaction is Ca(2+)(in) = Ca(2+)(out). It catalyses the reaction Na(+)(in) = Na(+)(out). The enzyme catalyses K(+)(in) = K(+)(out). It carries out the reaction NH4(+)(in) = NH4(+)(out). The catalysed reaction is Rb(+)(in) = Rb(+)(out). It catalyses the reaction Li(+)(in) = Li(+)(out). The enzyme catalyses Cs(+)(in) = Cs(+)(out). Its function is as follows. Pore-forming subunit of the rod cyclic nucleotide-gated channel. Mediates rod photoresponses at dim light converting transient changes in intracellular cGMP levels into electrical signals. In the dark, cGMP levels are high and keep the channel open enabling a steady inward current carried by Na(+) and Ca(2+) ions that leads to membrane depolarization and neurotransmitter release from synaptic terminals. Upon photon absorption cGMP levels decline leading to channel closure and membrane hyperpolarization that ultimately slows neurotransmitter release and signals the presence of light, the end point of the phototransduction cascade. Pore-forming subunit of the olfactory cyclic nucleotide-gated channel. Operates in the cilia of olfactory sensory neurons where chemical stimulation of the odorant is converted to an electrical signal. Mediates odorant-induced cAMP-dependent Ca(2+) influx triggering neuron depolarization. The rise of intracellular Ca(2+) levels potentiates the olfactory response by activating Ca(2+)-dependent Cl(-) channels, but it also serves as a negative feedback signal to desensitize the channel for rapid adaptation to odorants. Conducts cGMP- and cAMP-gated ion currents, with permeability for monovalent and divalent cations. The selectivity for Ca(2+) over Na(+) increases with cGMP concentrations, whereas the selectivity among monovalent ions is independent of the cGMP levels. High affinity rod photoreceptor phosphodiesterase (PDE6)-binding protein that modulates its catalytic properties: it is a regulator of spontaneous activation of rod PDE6, thereby serving to lower rod photoreceptor 'dark noise' and allowing these sensory cells to operate at the single photon detection limit. This Homo sapiens (Human) protein is Cyclic nucleotide-gated channel beta-1.